Here is a 272-residue protein sequence, read N- to C-terminus: MSDQQLDCALDLMRRLPPQQIEKNLSDLIDLVPSLCEDLLSSVDQPLKIARDKVVGKDYLLCDYNRDGDSYRSPWSNKYDPPLEDGAMPSARLRKLEVEANNAFDQYRDLYFEGGVSSVYLWDLDHGFAGVILIKKAGDGSKKIKGCWDSIHVVEVQEKSSGRTAHYKLTSTVMLWLQTNKSGSGTMNLGGSLTRQMEKDETVSDCSPHIANIGRLVEDMENKIRSTLNEIYFGKTKDIVNGLRSVQTFADKSKQEALKNDLVEALKRKQQC.

Ser2 carries the N-acetylserine modification. The residue at position 2 (Ser2) is a Phosphoserine. The residue at position 235 (Lys235) is an N6-acetyllysine. Position 263 is a phosphoserine (Val263).

This sequence belongs to the F-actin-capping protein beta subunit family. Component of the F-actin capping complex, composed of a heterodimer of an alpha and a beta subunit. Subunit of dynactin, a multiprotein complex part of a tripartite complex with dynein and a adapter, such as BICDL1, BICD2 or HOOK3. The dynactin complex is built around ACTR1A/ACTB filament and consists of an actin-related filament composed of a shoulder domain, a pointed end and a barbed end. Its length is defined by its flexible shoulder domain. The soulder is composed of 2 DCTN1 subunits, 4 DCTN2 and 2 DCTN3. The 4 DCNT2 (via N-terminus) bind the ACTR1A filament and act as molecular rulers to determine the length. The pointed end is important for binding dynein-dynactin cargo adapters. Consists of 4 subunits: ACTR10, DCNT4, DCTN5 and DCTN6. The barbed end is composed of a CAPZA1:CAPZB heterodimers, which binds ACTR1A/ACTB filament and dynactin and stabilizes dynactin. Interacts with ARHGAP17. Interaction with RCSD1/CAPZIP. Component of the WASH complex, composed of F-actin-capping protein subunit alpha (CAPZA1, CAPZA2 or CAPZA3), F-actin-capping protein subunit beta (CAPZB), WASH (WASHC1, WASH2P, WASH3P, WASH4P, WASH5P or WASH6P), WASHC2 (WASHC2A or WASHC2C), WASHC3, WASHC4 and WASHC5. Interacts with ACTG1. Directly interacts with CRACD; this interaction decreases binding to actin.

The protein resides in the cytoplasm. It localises to the cytoskeleton. The protein localises to the myofibril. Its subcellular location is the sarcomere. Its function is as follows. F-actin-capping proteins bind in a Ca(2+)-independent manner to the fast growing ends of actin filaments (barbed end) thereby blocking the exchange of subunits at these ends. Unlike other capping proteins (such as gelsolin and severin), these proteins do not sever actin filaments. Plays a role in the regulation of cell morphology and cytoskeletal organization. Forms, with CAPZB, the barbed end of the fast growing ends of actin filaments in the dynactin complex and stabilizes dynactin structure. The dynactin multiprotein complex activates the molecular motor dynein for ultra-processive transport along microtubules. The polypeptide is F-actin-capping protein subunit beta (Homo sapiens (Human)).